We begin with the raw amino-acid sequence, 392 residues long: Adenine nucleotide transporter BT1, chloroplastic/mitochondrial (392 aa).

Solcar repeat units follow at residues 108-191, 202-286, and 296-384; these read NPSL…VNKK, IPIP…LRKA, and IGNI…CKKI. 6 consecutive transmembrane segments (helical) span residues 113-133, 168-188, 204-224, 263-283, 302-322, and 359-379; these read RLLS…PLET, LVNV…FETV, IPAS…LTYP, APSL…YDSL, LLIG…LEVA, and GLGP…MCYE.

It belongs to the mitochondrial carrier (TC 2.A.29) family. Expressed in root tips, the central cylinder of young roots, and maturating and germinating pollen.

It is found in the plastid. It localises to the chloroplast inner membrane. The protein resides in the mitochondrion inner membrane. With respect to regulation, inhibited by pyridoxal 5-phosphate but not mersalyl. Its function is as follows. Probable mitochondrial adenylate carrier that catalyzes the transport of ATP, ADP and AMP, but not ADP-glucose. Recombinant BT1 shows a unidirectional mode of transport in intact E.coli cells. May function as a plastidial nucleotide uniport carrier required to export newly synthesized adenylates into the cytosol. May be involved in abiotic stress response. This is Adenine nucleotide transporter BT1, chloroplastic/mitochondrial (BT1) from Arabidopsis thaliana (Mouse-ear cress).